A 365-amino-acid polypeptide reads, in one-letter code: MSLIRKKGFYKQDVNKXXXELXKTYVSPTHVGSGAYGSVCSAIDKRSGEKVAIKKLSRPFQSEIFAKRAYRELLLLKHMQHENVIGLLDVFTPASSLRNFHDFYLVMXFMQTDLQKIMXMEFSEEKIQYLVYQMLKGLKYIHSAGVVHRDLKPGNLAVNEDCELKILDFGLARHADAEMTGYVVTRWYRAPEVILSWMHYNQTVDIWSVGCIMAEMLTGKTLFKGKDYLDQLTQILKVTGVPGTEFVQKLNDXAAKSYIQSLPQTPRKDFTQLFPRASPQAADLLEKMLELDVDKRLTAAQALTHPFFEPFRDPEEETEAQQPFDDSLEHEKLTVDEWKQHIYKEIVNFSPIARKDSRRRXGXKL.

Positions 25 to 308 (YVSPTHVGSG…AAQALTHPFF (284 aa)) constitute a Protein kinase domain. 31 to 39 (VGSGAYGSV) contributes to the ATP binding site. Serine 47 is modified (phosphoserine). Residue lysine 54 coordinates ATP. Aspartate 150 acts as the Proton acceptor in catalysis. The residue at position 180 (threonine 180) is a Phosphothreonine; by MAP2K3, MAP2K4, MAP2K6 and MAP2K7. Residues 180–182 (TGY) carry the TXY motif. Tyrosine 182 bears the Phosphotyrosine; by MAP2K3, MAP2K4, MAP2K6 and MAP2K7 mark. Serine 350 bears the Phosphoserine mark.

The protein belongs to the protein kinase superfamily. CMGC Ser/Thr protein kinase family. MAP kinase subfamily. As to quaternary structure, interacts with MAPK8IP2. It depends on Mg(2+) as a cofactor. Dually phosphorylated on Thr-180 and Tyr-182 by MAP2K3/MKK3, MAP2K4/MKK4, MAP2K6/MKK6 and MAP2K7/MKK7, which activates the enzyme. Dephosphorylated by dual specificity phosphatase DUSP1.

It carries out the reaction L-seryl-[protein] + ATP = O-phospho-L-seryl-[protein] + ADP + H(+). The enzyme catalyses L-threonyl-[protein] + ATP = O-phospho-L-threonyl-[protein] + ADP + H(+). Activated by phosphorylation on threonine and tyrosine by dual specificity kinases, MAP2K3/MKK3, MAP2K6/MKK6, MAP2K4/MKK4 and MAP2K7/MKK7. Activation by ultraviolet radiation, hyperosmotic shock, anisomycin or by TNF-alpha is mediated by MAP2K3/MKK3. Inhibited by dual specificity phosphatase DUSP1. Its function is as follows. Serine/threonine kinase which acts as an essential component of the MAP kinase signal transduction pathway. MAPK13 is one of the four p38 MAPKs which play an important role in the cascades of cellular responses evoked by extracellular stimuli such as pro-inflammatory cytokines or physical stress leading to direct activation of transcription factors such as ELK1 and ATF2. Accordingly, p38 MAPKs phosphorylate a broad range of proteins and it has been estimated that they may have approximately 200 to 300 substrates each. MAPK13 is one of the less studied p38 MAPK isoforms. Some of the targets are downstream kinases such as MAPKAPK2, which are activated through phosphorylation and further phosphorylate additional targets. Plays a role in the regulation of protein translation by phosphorylating and inactivating EEF2K. Involved in cytoskeletal remodeling through phosphorylation of MAPT and STMN1. Mediates UV irradiation induced up-regulation of the gene expression of CXCL14. Plays an important role in the regulation of epidermal keratinocyte differentiation, apoptosis and skin tumor development. Phosphorylates the transcriptional activator MYB in response to stress which leads to rapid MYB degradation via a proteasome-dependent pathway. MAPK13 also phosphorylates and down-regulates PRKD1 during regulation of insulin secretion in pancreatic beta cells. In Pan troglodytes (Chimpanzee), this protein is Mitogen-activated protein kinase 13 (MAPK13).